The sequence spans 429 residues: Glucose-6-phosphate isomerase (429 aa).

Glu282 acts as the Proton donor in catalysis. Residues His303 and Lys418 contribute to the active site.

The protein belongs to the GPI family.

The protein localises to the cytoplasm. It catalyses the reaction alpha-D-glucose 6-phosphate = beta-D-fructose 6-phosphate. It functions in the pathway carbohydrate biosynthesis; gluconeogenesis. Its pathway is carbohydrate degradation; glycolysis; D-glyceraldehyde 3-phosphate and glycerone phosphate from D-glucose: step 2/4. Catalyzes the reversible isomerization of glucose-6-phosphate to fructose-6-phosphate. In Mesomycoplasma hyopneumoniae (strain 232) (Mycoplasma hyopneumoniae), this protein is Glucose-6-phosphate isomerase.